A 103-amino-acid chain; its full sequence is Somatostatin-2 (103 aa).

The N-terminal stretch at 1–21 (MLGSAGTLLLLLLAWGARALS) is a signal peptide. Residues 22–87 (QPDDNRITTG…VKFPRLSLRE (66 aa)) constitute a propeptide that is removed on maturation. C92 and C103 form a disulfide bridge.

This sequence belongs to the somatostatin family.

The protein resides in the secreted. In terms of biological role, somatostatin inhibits the release of somatotropin. This chain is Somatostatin-2 (sst2), found in Pelophylax ridibundus (Marsh frog).